Reading from the N-terminus, the 71-residue chain is UPF0346 protein SMU_1621c (71 aa).

This sequence belongs to the UPF0346 family.

This chain is UPF0346 protein SMU_1621c, found in Streptococcus mutans serotype c (strain ATCC 700610 / UA159).